The chain runs to 317 residues: Small ribosomal subunit protein RACK1 (317 aa).

WD repeat units lie at residues glycine 15 to tyrosine 55, glycine 64 to arginine 103, glycine 106 to threonine 146, histidine 148 to aspartate 188, glycine 191 to threonine 230, glutamate 232 to lysine 272, and alanine 281 to alanine 317.

It belongs to the WD repeat G protein beta family. Ribosomal protein RACK1 subfamily. As to quaternary structure, component of the small ribosomal subunit. Mature ribosomes consist of a small (40S) and a large (60S) subunit. The 40S subunit contains about 32 different proteins and 1 molecule of RNA (18S). The 60S subunit contains 45 different proteins and 3 molecules of RNA (25S, 5.8S and 5S).

It is found in the cytoplasm. Its function is as follows. Component of the ribosome, a large ribonucleoprotein complex responsible for the synthesis of proteins in the cell. The small ribosomal subunit (SSU) binds messenger RNAs (mRNAs) and translates the encoded message by selecting cognate aminoacyl-transfer RNA (tRNA) molecules. The large subunit (LSU) contains the ribosomal catalytic site termed the peptidyl transferase center (PTC), which catalyzes the formation of peptide bonds, thereby polymerizing the amino acids delivered by tRNAs into a polypeptide chain. The nascent polypeptides leave the ribosome through a tunnel in the LSU and interact with protein factors that function in enzymatic processing, targeting, and the membrane insertion of nascent chains at the exit of the ribosomal tunnel. Located at the head of the 40S ribosomal subunit in the vicinity of the mRNA exit channel, it serves as a scaffold protein that can recruit other proteins to the ribosome. Involved in the negative regulation of translation of a specific subset of proteins. Plays a role in morphogenesis and pathogenesis. This chain is Small ribosomal subunit protein RACK1, found in Candida albicans (strain SC5314 / ATCC MYA-2876) (Yeast).